We begin with the raw amino-acid sequence, 315 residues long: Thioredoxin reductase (315 aa).

Residue 45–52 (EGSTPGGK) participates in FAD binding. A disulfide bond links cysteine 145 and cysteine 148. 288–297 (DCRSKHFRQI) contributes to the FAD binding site.

It belongs to the class-II pyridine nucleotide-disulfide oxidoreductase family. In terms of assembly, homodimer. FAD serves as cofactor.

The protein resides in the cytoplasm. It carries out the reaction [thioredoxin]-dithiol + NADP(+) = [thioredoxin]-disulfide + NADPH + H(+). The protein is Thioredoxin reductase (trxB) of Mycoplasma pneumoniae (strain ATCC 29342 / M129 / Subtype 1) (Mycoplasmoides pneumoniae).